The sequence spans 1507 residues: DE-cadherin (1507 aa).

The first 69 residues, 1-69 (MSTSVQRMSR…AISLLSPALA (69 aa)), serve as a signal peptide directing secretion. Residues 70–261 (LHSPPDKNFS…IYLKRPIDKR (192 aa)) constitute a propeptide that is removed on maturation. 7 consecutive Cadherin domains span residues 97 to 195 (VKEE…APAF), 204 to 301 (MSEN…PPSF), 311 to 412 (LKEN…IPYY), 420 to 522 (ILEN…KPHF), 532 to 633 (LLED…TILE), 631 to 733 (ILEE…APFL), and 741 to 835 (WQEN…NDNA). The Extracellular portion of the chain corresponds to 262–1328 (PGQSYAIIVR…VAFSFGIDRN (1067 aa)). Asn317, Asn466, and Asn552 each carry an N-linked (GlcNAc...) asparagine glycan. Asn766, Asn949, Asn983, Asn999, and Asn1073 each carry an N-linked (GlcNAc...) asparagine glycan. The 40-residue stretch at 1084-1123 (VQAQCVCEAPLMRRCLNGGSPRYGENDVCDCIDGFTGPHC) folds into the EGF-like domain. Disulfide bonds link Cys1098–Cys1112 and Cys1114–Cys1123. Residues 1125–1313 (LVSVAFYGSG…SVFRNIDSGC (189 aa)) enclose the Laminin G-like domain. N-linked (GlcNAc...) asparagine glycosylation is found at Asn1145, Asn1274, and Asn1290. A disulfide bridge links Cys1287 with Cys1313. The chain crosses the membrane as a helical span at residues 1329-1349 (FIIAIIVCLALLLIILLAVVV). Residues 1350–1507 (QKKQKNGWHE…NVDDDQGWRI (158 aa)) are Cytoplasmic-facing. Residues 1350–1507 (QKKQKNGWHE…NVDDDQGWRI (158 aa)) are interaction with Inx2. A disordered region spans residues 1488-1507 (YGEEPSDTDSNVDDDQGWRI). At Ser1493 the chain carries Phosphoserine.

In terms of assembly, interacts (via cytoplasmic region) with Inx2 (via cytoplasmic loop). Interacts with Hakai. Interacts with Myo31DF. N-glycosylation is important for biosynthesis and function. In terms of tissue distribution, in early stage 9 and stage 10 oocytes, expressed in border cells, strongly expressed in polar cells and very weakly expressed in the nurse cells (at protein level). In the embryo, expressed in the leading edge cells of the dorsal epidermis (at protein level). Stage 10 embryos exhibit intense expression in epithelial cells. Stage 14 embryos show expression in the hindgut (at the apical poles of cell-cell boundaries), at the apical junctions of tracheal cells and in the dorsal longitudinal trunk. In stage 16 embryos the glial midline cells of the central nervous system show strong expression.

It localises to the cell membrane. It is found in the apical cell membrane. Cadherins are calcium-dependent cell adhesion proteins. In connecting cells they preferentially interact with themselves in a homophilic manner; cadherins may thus contribute to the sorting of heterogeneous cell types. During oogenesis, integral component of the guidance mechanisms that regulate the directional persistent collective migration of the border cell (BC) cluster through the nurse cells to the oocyte. Functions downstream of the two chemoattractant receptors, Pvr and Egfr, to promote BC adhesion between the leader cells of the migrating cluster and the surrounding nurse cells. This adhesion increases Rac1 signaling in the leading cells, which in turn stabilizes DE-cadherin/DE-cadherin adhesions through the formation of forward-directed protrusions which attach/detach to the surrounding nurse cells in order to pull the cluster through the egg chamber to the oocyte. Within the BC cluster, also promotes adhesion between BCs, and between BCs and polar cells which enables the lead BC to communicate direction to the other cells in the cluster, providing polarity to each individual cell and ensuring collective behavior. May function in cell intercalation in the lateral epidermis during germband extension. Contributes to the determination of body left-right asymmetry by enhancing Myo31DF activity and inhibiting Myo61F activity. The sequence is that of DE-cadherin from Drosophila melanogaster (Fruit fly).